The chain runs to 329 residues: Anthranilate phosphoribosyltransferase (329 aa).

5-phospho-alpha-D-ribose 1-diphosphate contacts are provided by residues Gly78, 81–82 (GD), Thr86, 88–91 (NLST), 106–114 (KHGNRSASG), and Ser118. Gly78 contributes to the anthranilate binding site. Ser90 contacts Mg(2+). Anthranilate is bound at residue Asn109. Arg164 serves as a coordination point for anthranilate. Mg(2+)-binding residues include Asp221 and Glu222.

Belongs to the anthranilate phosphoribosyltransferase family. In terms of assembly, homodimer. Requires Mg(2+) as cofactor.

It carries out the reaction N-(5-phospho-beta-D-ribosyl)anthranilate + diphosphate = 5-phospho-alpha-D-ribose 1-diphosphate + anthranilate. Its pathway is amino-acid biosynthesis; L-tryptophan biosynthesis; L-tryptophan from chorismate: step 2/5. Its function is as follows. Catalyzes the transfer of the phosphoribosyl group of 5-phosphorylribose-1-pyrophosphate (PRPP) to anthranilate to yield N-(5'-phosphoribosyl)-anthranilate (PRA). The sequence is that of Anthranilate phosphoribosyltransferase from Pyrobaculum islandicum (strain DSM 4184 / JCM 9189 / GEO3).